We begin with the raw amino-acid sequence, 429 residues long: GDP-fucose protein O-fucosyltransferase 2 (429 aa).

An N-terminal signal peptide occupies residues 1-21 (MATLSFVFLLLGAVSWPPASA). 53-57 (PEGFN) contacts GDP-beta-L-fucose. The active-site Proton acceptor is the glutamate 54. An intrachain disulfide couples cysteine 161 to cysteine 192. N-linked (GlcNAc...) asparagine glycans are attached at residues asparagine 189, asparagine 209, and asparagine 259. GDP-beta-L-fucose contacts are provided by residues 292-294 (HLR), aspartate 371, and 388-389 (TF). An intrachain disulfide couples cysteine 412 to cysteine 419.

This sequence belongs to the glycosyltransferase 68 family.

The protein resides in the endoplasmic reticulum. The protein localises to the golgi apparatus. It carries out the reaction L-seryl-[protein] + GDP-beta-L-fucose = 3-O-(alpha-L-fucosyl)-L-seryl-[protein] + GDP + H(+). It catalyses the reaction L-threonyl-[protein] + GDP-beta-L-fucose = 3-O-(alpha-L-fucosyl)-L-threonyl-[protein] + GDP + H(+). Its pathway is protein modification; protein glycosylation. Its function is as follows. Catalyzes the reaction that attaches fucose through an O-glycosidic linkage to a conserved serine or threonine residue in the consensus sequence C1-X-X-S/T-C2 of thrombospondin type I repeats (TSRs) where C1 and C2 are the first and second cysteines of the repeat, respectively. O-fucosylates members of several protein families including the ADAMTS, the thrombospondin (TSP) and spondin families. Required for the proper secretion of ADAMTS family members such as ADAMTSL1 and ADAMTS13. The O-fucosylation of TSRs is also required for restricting epithelial to mesenchymal transition (EMT), maintaining the correct patterning of mesoderm and localization of the definite endoderm. In Pan troglodytes (Chimpanzee), this protein is GDP-fucose protein O-fucosyltransferase 2 (POFUT2).